We begin with the raw amino-acid sequence, 477 residues long: Bifunctional protein HldE (477 aa).

Residues 1-318 (MKVTLPEFER…ENAVRGRADT (318 aa)) form a ribokinase region. Position 179 is an N6-acetyllysine (K179). 195-198 (NLSE) is an ATP binding site. The active site involves D264. Positions 344 to 477 (MTNGVFDILH…IKKIQQDKKG (134 aa)) are cytidylyltransferase.

The protein in the N-terminal section; belongs to the carbohydrate kinase PfkB family. It in the C-terminal section; belongs to the cytidylyltransferase family. In terms of assembly, homodimer.

It carries out the reaction D-glycero-beta-D-manno-heptose 7-phosphate + ATP = D-glycero-beta-D-manno-heptose 1,7-bisphosphate + ADP + H(+). The catalysed reaction is D-glycero-beta-D-manno-heptose 1-phosphate + ATP + H(+) = ADP-D-glycero-beta-D-manno-heptose + diphosphate. It functions in the pathway nucleotide-sugar biosynthesis; ADP-L-glycero-beta-D-manno-heptose biosynthesis; ADP-L-glycero-beta-D-manno-heptose from D-glycero-beta-D-manno-heptose 7-phosphate: step 1/4. It participates in nucleotide-sugar biosynthesis; ADP-L-glycero-beta-D-manno-heptose biosynthesis; ADP-L-glycero-beta-D-manno-heptose from D-glycero-beta-D-manno-heptose 7-phosphate: step 3/4. Its function is as follows. Catalyzes the phosphorylation of D-glycero-D-manno-heptose 7-phosphate at the C-1 position to selectively form D-glycero-beta-D-manno-heptose-1,7-bisphosphate. Functionally, catalyzes the ADP transfer from ATP to D-glycero-beta-D-manno-heptose 1-phosphate, yielding ADP-D-glycero-beta-D-manno-heptose. This Escherichia coli O9:H4 (strain HS) protein is Bifunctional protein HldE.